Here is a 1021-residue protein sequence, read N- to C-terminus: Sodium/potassium-transporting ATPase subunit alpha-1 (1021 aa).

Residues 1-5 constitute a propeptide that is removed on maturation; that stretch reads MGKGV. A compositionally biased stretch (basic and acidic residues) spans 1–11; sequence MGKGVGRDKYE. The segment at 1–36 is disordered; it reads MGKGVGRDKYEPAAVSEHGDKKKAKKERDMDELKKE. Over 6–85 the chain is Cytoplasmic; the sequence is GRDKYEPAAV…NALTPPPTTP (80 aa). N6-acetyllysine is present on Lys-9. A Phosphotyrosine modification is found at Tyr-10. At Ser-16 the chain carries Phosphoserine; by PKC. Lys-21 is modified (N6-acetyllysine). The segment covering 26–36 has biased composition (basic and acidic residues); that stretch reads KERDMDELKKE. Phosphoserine occurs at positions 38 and 45. A phosphoinositide-3 kinase binding region spans residues 80 to 82; that stretch reads PPP. The helical transmembrane segment at 86 to 106 threads the bilayer; the sequence is EWVKFCRQLFGGFSMLLWIGA. The Extracellular portion of the chain corresponds to 107 to 129; it reads VLCFLAYGIQAATEEEPQNDNLY. The chain crosses the membrane as a helical span at residues 130 to 150; sequence LGVVLSAVVIITGCFSYYQEA. Residues 151–286 are Cytoplasmic-facing; the sequence is KSSKIMESFK…GGQTPIAAEI (136 aa). The residue at position 226 (Ser-226) is a Phosphoserine. Phosphotyrosine is present on Tyr-258. Residues 287-306 traverse the membrane as a helical segment; sequence EHFIHIITGVAVFLGVSFFI. The Extracellular portion of the chain corresponds to 307-318; the sequence is LSLILEYTWLEA. A helical membrane pass occupies residues 319-336; sequence VIFLIGIIVANVPEGLLA. Topologically, residues 337 to 770 are cytoplasmic; the sequence is TVTVCLTLTA…EEGRLIFDNL (434 aa). Asp-374 acts as the 4-aspartylphosphate intermediate in catalysis. Phosphoserine is present on residues Ser-450 and Ser-482. Lys-485 is an ATP binding site. Residue Tyr-540 is modified to Phosphotyrosine. Residues 594–715 form a mediates interaction with SCN7A region; the sequence is RAAVPDAVGK…QGAIVAVTGD (122 aa). Residue Ser-666 is modified to Phosphoserine. Asp-715 and Asp-719 together coordinate Mg(2+). Residues 771 to 790 form a helical membrane-spanning segment; the sequence is KKSIAYTLTSNIPEITPFLI. Residues 791–800 lie on the Extracellular side of the membrane; it reads FIIANIPLPL. A helical membrane pass occupies residues 801–821; it reads GTVTILCIDLGTDMVPAISLA. Residues 822-841 lie on the Cytoplasmic side of the membrane; that stretch reads YEQAESDIMKRQPRNPQTDK. Residues 842–864 traverse the membrane as a helical segment; sequence LVNERLISMAYGQIGMIQALGGF. Residues 865–916 are Extracellular-facing; it reads FTYFVIMAENGFLPNHLLGIRVTWDDRWINDVEDSYGQQWTYEQRKIVEFTC. The chain crosses the membrane as a helical span at residues 917 to 936; the sequence is HTAFFVSIVVVQWADLVICK. The Cytoplasmic segment spans residues 937–949; it reads TRRNSVFQQGMKN. Ser-941 carries the post-translational modification Phosphoserine; by PKA. The helical transmembrane segment at 950–968 threads the bilayer; it reads KILIFGLFEETALAAFLSY. Over 969-983 the chain is Extracellular; the sequence is CPGMGVALRMYPLKP. A helical transmembrane segment spans residues 984 to 1004; sequence TWWFCAFPYSLLIFVYDEVRK. The Cytoplasmic segment spans residues 1005–1021; that stretch reads LIIRRRPGGWVEKETYY.

The protein belongs to the cation transport ATPase (P-type) (TC 3.A.3) family. Type IIC subfamily. In terms of assembly, the sodium/potassium-transporting ATPase is composed of a catalytic alpha subunit, an auxiliary non-catalytic beta subunit and an additional regulatory subunit. Interacts with regulatory subunit FXYD1. Interacts with regulatory subunit FXYD3. Interacts with SIK1. Interacts with SLC35G1 and STIM1. Interacts with CLN3; this interaction regulates the sodium/potassium-transporting ATPase complex localization at the plasma membrane. Interacts with SCN7A; activates ATP1A1 P-type sodium:potassium-exchanging transporter activity which indirectly signals to nearby neurons to regulate sodium homeostasis. In terms of processing, phosphorylation on Tyr-10 modulates pumping activity. Phosphorylation of Ser-941 by PKA modulates the response of ATP1A1 to PKC. Dephosphorylation by protein phosphatase 2A (PP2A) following increases in intracellular sodium, leading to increase catalytic activity.

It localises to the cell membrane. The protein localises to the basolateral cell membrane. The protein resides in the sarcolemma. It is found in the cell projection. Its subcellular location is the axon. It localises to the melanosome. The enzyme catalyses K(+)(out) + Na(+)(in) + ATP + H2O = K(+)(in) + Na(+)(out) + ADP + phosphate + H(+). In terms of biological role, this is the catalytic component of the active enzyme, which catalyzes the hydrolysis of ATP coupled with the exchange of sodium and potassium ions across the plasma membrane. This action creates the electrochemical gradient of sodium and potassium ions, providing the energy for active transport of various nutrients. Could also be part of an osmosensory signaling pathway that senses body-fluid sodium levels and controls salt intake behavior as well as voluntary water intake to regulate sodium homeostasis. The chain is Sodium/potassium-transporting ATPase subunit alpha-1 (ATP1A1) from Bos taurus (Bovine).